We begin with the raw amino-acid sequence, 433 residues long: uncharacterized protein (433 aa).

One can recognise an HD domain in the interval 61 to 178; the sequence is RFNHSLGVYE…QIDADRMDYL (118 aa).

This is an uncharacterized protein from Bacillus subtilis (strain 168).